Reading from the N-terminus, the 597-residue chain is Arginine--tRNA ligase (597 aa).

A 'HIGH' region motif is present at residues 125 to 135; that stretch reads PNTNKPLHLGH.

The protein belongs to the class-I aminoacyl-tRNA synthetase family. Monomer.

Its subcellular location is the cytoplasm. It catalyses the reaction tRNA(Arg) + L-arginine + ATP = L-arginyl-tRNA(Arg) + AMP + diphosphate. The protein is Arginine--tRNA ligase of Parabacteroides distasonis (strain ATCC 8503 / DSM 20701 / CIP 104284 / JCM 5825 / NCTC 11152).